A 143-amino-acid chain; its full sequence is Large ribosomal subunit protein uL11 (143 aa).

It belongs to the universal ribosomal protein uL11 family. Part of the ribosomal stalk of the 50S ribosomal subunit. Interacts with L10 and the large rRNA to form the base of the stalk. L10 forms an elongated spine to which L12 dimers bind in a sequential fashion forming a multimeric L10(L12)X complex. Post-translationally, one or more lysine residues are methylated.

Functionally, forms part of the ribosomal stalk which helps the ribosome interact with GTP-bound translation factors. This is Large ribosomal subunit protein uL11 from Pseudomonas paraeruginosa (strain DSM 24068 / PA7) (Pseudomonas aeruginosa (strain PA7)).